A 748-amino-acid polypeptide reads, in one-letter code: 5-methyltetrahydropteroyltriglutamate--homocysteine methyltransferase (748 aa).

Residues 18-21 (REWK) and Lys112 contribute to the 5-methyltetrahydropteroyltri-L-glutamate site. L-homocysteine-binding positions include 420-422 (IGS) and Glu473. L-methionine-binding positions include 420–422 (IGS) and Glu473. Trp550 is a binding site for 5-methyltetrahydropteroyltri-L-glutamate. Residue Asp588 coordinates L-homocysteine. Residue Asp588 coordinates L-methionine. Glu594 serves as a coordination point for 5-methyltetrahydropteroyltri-L-glutamate. His630, Cys632, and Glu654 together coordinate Zn(2+). The Proton donor role is filled by His683. Cys715 lines the Zn(2+) pocket.

It belongs to the vitamin-B12 independent methionine synthase family. Zn(2+) is required as a cofactor.

It catalyses the reaction 5-methyltetrahydropteroyltri-L-glutamate + L-homocysteine = tetrahydropteroyltri-L-glutamate + L-methionine. The protein operates within amino-acid biosynthesis; L-methionine biosynthesis via de novo pathway; L-methionine from L-homocysteine (MetE route): step 1/1. Its function is as follows. Catalyzes the transfer of a methyl group from 5-methyltetrahydrofolate to homocysteine resulting in methionine formation. The polypeptide is 5-methyltetrahydropteroyltriglutamate--homocysteine methyltransferase (Staphylococcus epidermidis (strain ATCC 35984 / DSM 28319 / BCRC 17069 / CCUG 31568 / BM 3577 / RP62A)).